Reading from the N-terminus, the 340-residue chain is Phosphoribosylformylglycinamidine cyclo-ligase (340 aa).

Belongs to the AIR synthase family.

The protein localises to the cytoplasm. It catalyses the reaction 2-formamido-N(1)-(5-O-phospho-beta-D-ribosyl)acetamidine + ATP = 5-amino-1-(5-phospho-beta-D-ribosyl)imidazole + ADP + phosphate + H(+). It participates in purine metabolism; IMP biosynthesis via de novo pathway; 5-amino-1-(5-phospho-D-ribosyl)imidazole from N(2)-formyl-N(1)-(5-phospho-D-ribosyl)glycinamide: step 2/2. This chain is Phosphoribosylformylglycinamidine cyclo-ligase, found in Streptococcus pneumoniae serotype 4 (strain ATCC BAA-334 / TIGR4).